We begin with the raw amino-acid sequence, 365 residues long: MSQRDFYEILGIAKNTDVKQIKKAYKRLAMKHHPDRVKDNKELAEKKFKEIQKAYAILSDTQKRQAYDQFGHAGINGNAGATSGTSFSSSGFGDIFGDIFGGGSQQSNNRGSDLRYDLEIDLKEAAQGTTVKIRIPKNETCDTCSGTGAKPGTSVKTCLTCGGAGQIQIQQGFFAVQRPCNACSGTGQRIESTCNNCHGKGVVHKQKTLSVKIPAGVDTGNRIRLSGEGEAGIRGGLSGDLYVQIHVKKHAIFERQDSDLYCEVPIDFATAVLGGQVEVPTLDNKLNIKVPAGTQTGKLFRLRSKGITHLQHGGSGDVICKVKLETPINLSKKQQDLLQKFSNSCGKKHHPESNSFFGKMKSFFE.

The region spanning 5 to 71 is the J domain; sequence DFYEILGIAK…QKRQAYDQFG (67 aa). The CR-type zinc finger occupies 128-206; the sequence is GTTVKIRIPK…CHGKGVVHKQ (79 aa). 8 residues coordinate Zn(2+): cysteine 141, cysteine 144, cysteine 158, cysteine 161, cysteine 180, cysteine 183, cysteine 194, and cysteine 197. CXXCXGXG motif repeat units lie at residues 141 to 148, 158 to 165, 180 to 187, and 194 to 201; these read CDTCSGTG, CLTCGGAG, CNACSGTG, and CNNCHGKG.

Belongs to the DnaJ family. Homodimer. Zn(2+) serves as cofactor.

The protein resides in the cytoplasm. Functionally, participates actively in the response to hyperosmotic and heat shock by preventing the aggregation of stress-denatured proteins and by disaggregating proteins, also in an autonomous, DnaK-independent fashion. Unfolded proteins bind initially to DnaJ; upon interaction with the DnaJ-bound protein, DnaK hydrolyzes its bound ATP, resulting in the formation of a stable complex. GrpE releases ADP from DnaK; ATP binding to DnaK triggers the release of the substrate protein, thus completing the reaction cycle. Several rounds of ATP-dependent interactions between DnaJ, DnaK and GrpE are required for fully efficient folding. Also involved, together with DnaK and GrpE, in the DNA replication of plasmids through activation of initiation proteins. This Vesicomyosocius okutanii subsp. Calyptogena okutanii (strain HA) protein is Chaperone protein DnaJ.